An 827-amino-acid polypeptide reads, in one-letter code: Penicillin-binding protein 1A (827 aa).

The Cytoplasmic segment spans residues 1–18 (MGKKKKKRKSSAFKIILN). Residues 19 to 39 (VFLSIFLVAGVAFGGIVFAMI) traverse the membrane as a helical; Signal-anchor for type II membrane protein segment. Residues 40 to 827 (KTAPPLNVQQ…QNHEDNKNKQ (788 aa)) lie on the Extracellular side of the membrane. Residues 57–229 (SILYDDKGQY…PSVYYPYSSA (173 aa)) form a transglycosylase region. The Proton donor; for transglycosylase activity role is filled by Glu-96. The tract at residues 357–641 (ASAVIMDYHN…AARLWGDIMK (285 aa)) is transpeptidase. The active-site Acyl-ester intermediate; for transpeptidase activity is the Ser-398. Residues 755-827 (GSLPPTEEKN…QNHEDNKNKQ (73 aa)) are disordered. Basic and acidic residues predominate over residues 760–790 (TEEKNNSNTRDKNKDKNKDKDKNKNKDKNPS). A compositionally biased stretch (low complexity) spans 791 to 817 (QDKPNNNNNNNNNDNNNNTKPPENDSN). Over residues 818 to 827 (QNHEDNKNKQ) the composition is skewed to basic and acidic residues.

The protein in the N-terminal section; belongs to the glycosyltransferase 51 family. It in the C-terminal section; belongs to the transpeptidase family.

Its subcellular location is the cell membrane. The enzyme catalyses [GlcNAc-(1-&gt;4)-Mur2Ac(oyl-L-Ala-gamma-D-Glu-L-Lys-D-Ala-D-Ala)](n)-di-trans,octa-cis-undecaprenyl diphosphate + beta-D-GlcNAc-(1-&gt;4)-Mur2Ac(oyl-L-Ala-gamma-D-Glu-L-Lys-D-Ala-D-Ala)-di-trans,octa-cis-undecaprenyl diphosphate = [GlcNAc-(1-&gt;4)-Mur2Ac(oyl-L-Ala-gamma-D-Glu-L-Lys-D-Ala-D-Ala)](n+1)-di-trans,octa-cis-undecaprenyl diphosphate + di-trans,octa-cis-undecaprenyl diphosphate + H(+). It catalyses the reaction Preferential cleavage: (Ac)2-L-Lys-D-Ala-|-D-Ala. Also transpeptidation of peptidyl-alanyl moieties that are N-acyl substituents of D-alanine.. It functions in the pathway cell wall biogenesis; peptidoglycan biosynthesis. Functionally, cell wall formation. Synthesis of cross-linked peptidoglycan from the lipid intermediates. The enzyme has a penicillin-insensitive transglycosylase N-terminal domain (formation of linear glycan strands) and a penicillin-sensitive transpeptidase C-terminal domain (cross-linking of the peptide subunits). The protein is Penicillin-binding protein 1A (pbpA) of Clostridium botulinum (strain Langeland / NCTC 10281 / Type F).